The chain runs to 534 residues: NEDD8-activating enzyme E1 regulatory subunit (534 aa).

N-acetylalanine is present on alanine 2. 2 positions are modified to N6-acetyllysine: lysine 6 and lysine 341. Residues 331–344 (DMIADSGKYIKLQN) are interaction with UBA3.

Belongs to the ubiquitin-activating E1 family. ULA1 subfamily. As to quaternary structure, heterodimer of UBA3 and NAE1. The complex binds NEDD8 and UBE2M. Binds APP and TP53BP2. Ubiquitinated by TRIP12, leading to its degradation by the proteasome. Ubiquitous in fetal tissues. Expressed throughout the adult brain.

The protein localises to the cell membrane. It functions in the pathway protein modification; protein neddylation. With respect to regulation, binding of TP53BP2 to the regulatory subunit NAE1 decreases neddylation activity. Functionally, regulatory subunit of the dimeric UBA3-NAE1 E1 enzyme. E1 activates NEDD8 by first adenylating its C-terminal glycine residue with ATP, thereafter linking this residue to the side chain of the catalytic cysteine, yielding a NEDD8-UBA3 thioester and free AMP. E1 finally transfers NEDD8 to the catalytic cysteine of UBE2M. Necessary for cell cycle progression through the S-M checkpoint. Overexpression of NAE1 causes apoptosis through deregulation of NEDD8 conjugation. The covalent attachment of NEDD8 to target proteins is known as 'neddylation' and the process is involved in the regulation of cell growth, viability and development. This Homo sapiens (Human) protein is NEDD8-activating enzyme E1 regulatory subunit (NAE1).